Consider the following 316-residue polypeptide: Ribosomal RNA small subunit methyltransferase H (316 aa).

S-adenosyl-L-methionine contacts are provided by residues 36–38 (GGH), Asp-56, Phe-83, Asp-104, and Gln-111.

The protein belongs to the methyltransferase superfamily. RsmH family.

Its subcellular location is the cytoplasm. It catalyses the reaction cytidine(1402) in 16S rRNA + S-adenosyl-L-methionine = N(4)-methylcytidine(1402) in 16S rRNA + S-adenosyl-L-homocysteine + H(+). Functionally, specifically methylates the N4 position of cytidine in position 1402 (C1402) of 16S rRNA. This chain is Ribosomal RNA small subunit methyltransferase H, found in Protochlamydia amoebophila (strain UWE25).